Here is a 1682-residue protein sequence, read N- to C-terminus: 1-phosphatidylinositol 4,5-bisphosphate phosphodiesterase eta-1 (1682 aa).

The PH domain maps to 20-128 (SVMQSGTQMI…WITGLKYLMA (109 aa)). 3 EF-hand domains span residues 142-177 (THDQ…LNVN), 178-214 (LPRR…MSLR), and 226-246 (DKKD…EQKM). Residues aspartate 155, asparagine 157, aspartate 159, and glutamate 166 each contribute to the Ca(2+) site. One can recognise a PI-PLC X-box domain in the interval 299 to 444 (QDMDQPLCNY…LKGKILVKGK (146 aa)). The active site involves histidine 314. Residues asparagine 315, glutamate 344, and aspartate 346 each coordinate Ca(2+). Residue histidine 358 is part of the active site. A Ca(2+)-binding site is contributed by glutamate 393. Residues lysine 442 and lysine 444 each coordinate substrate. Positions 534 to 588 (LDVKESGKKSHGRSLMANFGKHKQKATKSRSKSYSTDDEDDSLQNPGKEGGQLYR) are disordered. Residues 553–564 (GKHKQKATKSRS) are compositionally biased toward basic residues. The PI-PLC Y-box domain maps to 602-715 (LSDLVVYTNS…GYILKPQQMC (114 aa)). Substrate-binding residues include serine 628 and arginine 655. The 129-residue stretch at 716 to 844 (KGTFNPFSGD…PGYRHVYLEG (129 aa)) folds into the C2 domain. Residues isoleucine 759, aspartate 761, aspartate 785, aspartate 814, histidine 815, and aspartate 816 each contribute to the Ca(2+) site. Residues 992-1018 (DTDGKENCLAGDKDDRRKGAATRKDPH) show a composition bias toward basic and acidic residues. Disordered stretches follow at residues 992-1083 (DTDG…LSPR), 1296-1321 (NLPG…HSQV), and 1581-1603 (RAKE…GGVV). Over residues 1019–1033 (FSNFNKKLSSSSSAL) the composition is skewed to low complexity. Polar residues-rich tracts occupy residues 1040–1050 (QGPTASVSNPE) and 1065–1074 (NMTNDCQENH). Over residues 1581–1590 (RAKEKQEAGK) the composition is skewed to basic and acidic residues.

It depends on Ca(2+) as a cofactor. As to expression, expressed in brain and to a lower extent in lung. In brain, it is found in cerebrum, cerebellum and spinal cord.

It localises to the cytoplasm. The protein localises to the membrane. It catalyses the reaction a 1,2-diacyl-sn-glycero-3-phospho-(1D-myo-inositol-4,5-bisphosphate) + H2O = 1D-myo-inositol 1,4,5-trisphosphate + a 1,2-diacyl-sn-glycerol + H(+). In terms of biological role, the production of the second messenger molecules diacylglycerol (DAG) and inositol 1,4,5-trisphosphate (IP3) is mediated by calcium-activated phosphatidylinositol-specific phospholipase C enzymes. The sequence is that of 1-phosphatidylinositol 4,5-bisphosphate phosphodiesterase eta-1 from Mus musculus (Mouse).